Here is a 119-residue protein sequence, read N- to C-terminus: Urotensin-2B (119 aa).

Positions 1 to 28 (MNKILSSTVCFGLLTLLSVLSFLQSVHG) are cleaved as a signal peptide. Residues 29–109 (RPYLTQGNEI…VDGLFSSHPS (81 aa)) constitute a propeptide that is removed on maturation. C113 and C118 form a disulfide bridge.

Belongs to the urotensin-2 family.

It is found in the secreted. In terms of biological role, potent vasoconstrictor. The protein is Urotensin-2B (UTS2B) of Homo sapiens (Human).